The following is a 343-amino-acid chain: Aspartate carbamoyltransferase catalytic subunit (343 aa).

Residues 1 to 14 show a composition bias toward polar residues; the sequence is MTTDTTGRTGNPAA. Positions 1–20 are disordered; the sequence is MTTDTTGRTGNPAATASPDR. Positions 91 and 92 each coordinate carbamoyl phosphate. Residue Lys-119 coordinates L-aspartate. Carbamoyl phosphate-binding residues include Arg-141, His-171, and Gln-174. 2 residues coordinate L-aspartate: Arg-204 and Arg-259. Residues Gly-300 and Pro-301 each coordinate carbamoyl phosphate.

The protein belongs to the aspartate/ornithine carbamoyltransferase superfamily. ATCase family. As to quaternary structure, heterododecamer (2C3:3R2) of six catalytic PyrB chains organized as two trimers (C3), and six regulatory PyrI chains organized as three dimers (R2).

The enzyme catalyses carbamoyl phosphate + L-aspartate = N-carbamoyl-L-aspartate + phosphate + H(+). It participates in pyrimidine metabolism; UMP biosynthesis via de novo pathway; (S)-dihydroorotate from bicarbonate: step 2/3. Functionally, catalyzes the condensation of carbamoyl phosphate and aspartate to form carbamoyl aspartate and inorganic phosphate, the committed step in the de novo pyrimidine nucleotide biosynthesis pathway. In Burkholderia lata (strain ATCC 17760 / DSM 23089 / LMG 22485 / NCIMB 9086 / R18194 / 383), this protein is Aspartate carbamoyltransferase catalytic subunit.